Consider the following 84-residue polypeptide: Small ribosomal subunit protein uS17 (84 aa).

This sequence belongs to the universal ribosomal protein uS17 family. In terms of assembly, part of the 30S ribosomal subunit.

One of the primary rRNA binding proteins, it binds specifically to the 5'-end of 16S ribosomal RNA. The chain is Small ribosomal subunit protein uS17 from Clostridium botulinum (strain Okra / Type B1).